Reading from the N-terminus, the 117-residue chain is Large ribosomal subunit protein uL18 (117 aa).

Belongs to the universal ribosomal protein uL18 family. In terms of assembly, part of the 50S ribosomal subunit; part of the 5S rRNA/L5/L18/L25 subcomplex. Contacts the 5S and 23S rRNAs.

This is one of the proteins that bind and probably mediate the attachment of the 5S RNA into the large ribosomal subunit, where it forms part of the central protuberance. In Histophilus somni (strain 129Pt) (Haemophilus somnus), this protein is Large ribosomal subunit protein uL18.